We begin with the raw amino-acid sequence, 778 residues long: Probable protein kinase DDB_G0291133 (778 aa).

The interval 129–162 (LSINNNNNNNNNNGGYKIPSSVNKNSNNYNSNSN) is disordered. The region spanning 177 to 462 (FDVVCKLGSG…LDQILLNENI (286 aa)) is the Protein kinase domain. ATP-binding positions include 183–191 (LGSGSFSDV) and K206. The active-site Proton acceptor is the D303. Mg(2+) is bound by residues N308 and D321. Disordered regions lie at residues 478–509 (NIENDNNNNNNTDNNNNNNTDNINNDNNDDNN), 562–697 (HFVR…GFYG), and 757–778 (SHPQESDKMSPRNLLSLFQETN). Positions 578–590 (SDEEEDDDDDDDS) are enriched in acidic residues. Over residues 599-651 (SLNNLNNSSSNIGISESNSNNSFSSILEENNESSSSSPLPSLSFSRRLSTSSL) the composition is skewed to low complexity. Residues 652–670 (VTTISPKPNFNTSGNKLFS) are compositionally biased toward polar residues. Over residues 671 to 693 (NENNNSNNNNNNNNNNQNNNNNN) the composition is skewed to low complexity. Basic and acidic residues predominate over residues 757–766 (SHPQESDKMS).

This sequence belongs to the protein kinase superfamily. Ser/Thr protein kinase family. WEE1 subfamily.

It catalyses the reaction L-seryl-[protein] + ATP = O-phospho-L-seryl-[protein] + ADP + H(+). The catalysed reaction is L-threonyl-[protein] + ATP = O-phospho-L-threonyl-[protein] + ADP + H(+). This Dictyostelium discoideum (Social amoeba) protein is Probable protein kinase DDB_G0291133.